A 169-amino-acid polypeptide reads, in one-letter code: Ubiquitin-fold modifier-conjugating enzyme 1 (169 aa).

The active-site Glycyl thioester intermediate is Cys116.

Belongs to the ubiquitin-conjugating enzyme family. UFC1 subfamily.

E2-like enzyme which forms an intermediate with UFM1 via a thioester linkage. The chain is Ubiquitin-fold modifier-conjugating enzyme 1 from Nematostella vectensis (Starlet sea anemone).